An 898-amino-acid chain; its full sequence is Protein translocase subunit SecA (898 aa).

ATP contacts are provided by residues Gln87, Gly105–Thr109, and Asp512. Residues Met855–Ser865 are compositionally biased toward polar residues. Residues Met855–Tyr898 are disordered. Over residues Leu866–Arg876 the composition is skewed to basic and acidic residues. Cys880, Cys882, Cys891, and His892 together coordinate Zn(2+). Positions Lys886–Tyr898 are enriched in basic residues.

This sequence belongs to the SecA family. Monomer and homodimer. Part of the essential Sec protein translocation apparatus which comprises SecA, SecYEG and auxiliary proteins SecDF-YajC and YidC. Zn(2+) is required as a cofactor.

The protein localises to the cell inner membrane. It localises to the cytoplasm. It carries out the reaction ATP + H2O + cellular proteinSide 1 = ADP + phosphate + cellular proteinSide 2.. Functionally, part of the Sec protein translocase complex. Interacts with the SecYEG preprotein conducting channel. Has a central role in coupling the hydrolysis of ATP to the transfer of proteins into and across the cell membrane, serving both as a receptor for the preprotein-SecB complex and as an ATP-driven molecular motor driving the stepwise translocation of polypeptide chains across the membrane. The sequence is that of Protein translocase subunit SecA from Histophilus somni (strain 129Pt) (Haemophilus somnus).